The primary structure comprises 191 residues: Fe/S biogenesis protein NfuA (191 aa).

The [4Fe-4S] cluster site is built by Cys-149 and Cys-152.

This sequence belongs to the NfuA family. Homodimer. [4Fe-4S] cluster is required as a cofactor.

Its function is as follows. Involved in iron-sulfur cluster biogenesis. Binds a 4Fe-4S cluster, can transfer this cluster to apoproteins, and thereby intervenes in the maturation of Fe/S proteins. Could also act as a scaffold/chaperone for damaged Fe/S proteins. The polypeptide is Fe/S biogenesis protein NfuA (Pectobacterium carotovorum subsp. carotovorum (strain PC1)).